A 274-amino-acid chain; its full sequence is Penicillin-insensitive murein endopeptidase (274 aa).

The first 19 residues, methionine 1–alanine 19, serve as a signal peptide directing secretion. 3 disulfides stabilise this stretch: cysteine 44/cysteine 265, cysteine 187/cysteine 235, and cysteine 216/cysteine 223. The Zn(2+) site is built by histidine 110, histidine 113, aspartate 120, aspartate 147, histidine 150, and histidine 211. Residues aspartate 225–leucine 274 are disordered.

This sequence belongs to the peptidase M74 family. Dimer. Requires Zn(2+) as cofactor.

The protein localises to the periplasm. In terms of biological role, murein endopeptidase that cleaves the D-alanyl-meso-2,6-diamino-pimelyl amide bond that connects peptidoglycan strands. Likely plays a role in the removal of murein from the sacculus. The chain is Penicillin-insensitive murein endopeptidase from Salmonella paratyphi A (strain AKU_12601).